The primary structure comprises 267 residues: V-type proton ATPase subunit D (267 aa).

Belongs to the V-ATPase D subunit family. In terms of assembly, V-ATPase is a heteromultimeric enzyme composed of a peripheral catalytic V1 complex (components A to H) attached to an integral membrane V0 proton pore complex (components: a, c, c', c'', d, e, f and VOA1).

Its subcellular location is the vacuole membrane. In terms of biological role, subunit of the V1 complex of vacuolar(H+)-ATPase (V-ATPase), a multisubunit enzyme composed of a peripheral complex (V1) that hydrolyzes ATP and a membrane integral complex (V0) that translocates protons. V-ATPase is responsible for acidifying and maintaining the pH of intracellular compartments. In Candida albicans (strain SC5314 / ATCC MYA-2876) (Yeast), this protein is V-type proton ATPase subunit D (VMA8).